A 331-amino-acid polypeptide reads, in one-letter code: Phenylalanine--tRNA ligase alpha subunit (331 aa).

Glu-254 is a Mg(2+) binding site.

This sequence belongs to the class-II aminoacyl-tRNA synthetase family. Phe-tRNA synthetase alpha subunit type 1 subfamily. In terms of assembly, tetramer of two alpha and two beta subunits. Mg(2+) serves as cofactor.

It is found in the cytoplasm. It carries out the reaction tRNA(Phe) + L-phenylalanine + ATP = L-phenylalanyl-tRNA(Phe) + AMP + diphosphate + H(+). The chain is Phenylalanine--tRNA ligase alpha subunit from Blochmanniella pennsylvanica (strain BPEN).